Consider the following 383-residue polypeptide: MTTLSSQAAPAVNAVIERLQAWPGEHRVAVGLSGGVDSSLTAALLRDAQWQVEGLTLWLMSGKGACCAEGLVDAAGLCEELEIPHHVVDSRDTFQQEIVQFLVQGYGDGITPLPCSRCNRAVKFGPMLDWAEKERGITRVATGHYARLRPNADGGRTQLLRGLDARKDQSYFLYDLPQAVLQRLIFPLGELTKPDTRAEAARLGLRTAEKPESQDLCLADHHGSMKAFLDAYLPERPGEIVLTDGRVVGQHDGIEHFTIGQRKGLGVAWSEPLHVVRLDGAMNQVVVAPRAEAARGDAVVGAVNWVSIDPPAEPLDVEVQVRYRSAPERARLTPLPPVESDHQAERPHRCRLDFAEEQFSITPGQAAVFYDGEVCLGGGLIQA.

Residues 31-38 (GLSGGVDS) and Leu57 each bind ATP. The active-site Nucleophile is Cys118. A disulfide bridge connects residues Cys118 and Cys217. Position 143 (Gly143) interacts with ATP. Residues 167–169 (KDQ) form an interaction with tRNA region. Cys217 acts as the Cysteine persulfide intermediate in catalysis. Residues 322 to 323 (RY) are interaction with tRNA.

This sequence belongs to the MnmA/TRMU family.

The protein localises to the cytoplasm. The enzyme catalyses S-sulfanyl-L-cysteinyl-[protein] + uridine(34) in tRNA + AH2 + ATP = 2-thiouridine(34) in tRNA + L-cysteinyl-[protein] + A + AMP + diphosphate + H(+). Functionally, catalyzes the 2-thiolation of uridine at the wobble position (U34) of tRNA, leading to the formation of s(2)U34. In Synechococcus sp. (strain RCC307), this protein is tRNA-specific 2-thiouridylase MnmA.